The sequence spans 649 residues: MITLSKSQEEVFKKLAVELSMSKLIEACNKSVDFSSLNSNEQLDVLKVTNAFYRSAEQIINDSTYDAFLSEFSTYNPDHPYLLTVEPEVLADSKTVPLPKKMLSTDKAYSFEEIKKWIDRLLKAAIEVGVSESEIQIKVTPKLDGYAAYDDGISLYTRGDGARGQDITRAFNKGLQVANNGDRGLGPGEIVIKKSYFDTVLSDKFENSRNIQAAIIAEKKVDESIQKAIDVGACVFFPFLSLENWIGHYTEILVDFESIVEKMWSAVDYDIDGVVLEVTNETLKEHMGATRHHHRWQIAFKVNAESAEVKVLNVTPQTSRTGRVTPVAELEPTKLSGATISRATVHHYNMVKTNGVGPGAIVQLVRSGLVIPKIEKVIKAVEPQLAKECPSCGTHLIWESDHLVCPNKTDCPAQTENTLVHFFKTLGNNDGFGPKVIEKLHEFGIKKIHEIYELKQESFVSFGFGDKTAQNLVEQLQVSRDVEIEDWRFLAAFGVSRLAGGNCEKLLQHHSLDSLFEATVEDLVQLDGFAQVSADAIVEGLANIKEEFLKLSALNFNLTITPKASEKSPGETPVFGKIIVFTGAMTQGSRGDMEKQAKALGAKVAKSVTGKTSLLVTGDKVGANKINAARDKGVQVLSELDYLALISTY.

NAD(+) contacts are provided by residues Asp62–Asp66 and Ser104–Thr105. Lys142 acts as the N6-AMP-lysine intermediate in catalysis. NAD(+) contacts are provided by Arg158, Glu189, and Lys301. Residues Cys389, Cys392, Cys405, and Cys411 each coordinate Zn(2+). The region spanning Pro569–Tyr649 is the BRCT domain.

Belongs to the NAD-dependent DNA ligase family. LigA subfamily. Mg(2+) serves as cofactor. It depends on Mn(2+) as a cofactor.

It carries out the reaction NAD(+) + (deoxyribonucleotide)n-3'-hydroxyl + 5'-phospho-(deoxyribonucleotide)m = (deoxyribonucleotide)n+m + AMP + beta-nicotinamide D-nucleotide.. DNA ligase that catalyzes the formation of phosphodiester linkages between 5'-phosphoryl and 3'-hydroxyl groups in double-stranded DNA using NAD as a coenzyme and as the energy source for the reaction. It is essential for DNA replication and repair of damaged DNA. The protein is DNA ligase of Psychromonas ingrahamii (strain DSM 17664 / CCUG 51855 / 37).